A 1071-amino-acid chain; its full sequence is SLIT-ROBO Rho GTPase-activating protein 2 (1071 aa).

One can recognise an F-BAR domain in the interval 22-325 (KEIRAQLTEQ…AVENLDATSD (304 aa)). The segment covering 181 to 203 (LKEAEKQEEKQIGKSVKQEDRQT) has biased composition (basic and acidic residues). Positions 181 to 211 (LKEAEKQEEKQIGKSVKQEDRQTPRSPDSTA) are disordered. Position 206 is a phosphoserine (serine 206). The stretch at 362–401 (VQSELVQRCQQLQSRLSTLKIENEEVKKTMEATLQTIQDI) forms a coiled coil. A phosphoserine mark is found at serine 427, serine 500, serine 691, and serine 695. The Rho-GAP domain occupies 489-679 (ARRSSTVRKQ…TIIIQHENIF (191 aa)). The segment at 698–726 (DYCDSPHGETTSVEDSTQDVTAEHHTSDD) is disordered. Polar residues predominate over residues 705–717 (GETTSVEDSTQDV). Position 724 is a phosphoserine (serine 724). The 60-residue stretch at 728–787 (CEPIEAIAKFDYVGRTARELSFKKGASLLLYQRASDDWWEGRHNGIDGLIPHQYIVVQDT) folds into the SH3 domain. Residue serine 795 is modified to Phosphoserine. The tract at residues 837–936 (QRKRPESGSI…RSKSFNNHRP (100 aa)) is disordered. The segment covering 855–866 (HGLSSSLTDSSS) has biased composition (low complexity). 2 stretches are compositionally biased toward polar residues: residues 874–885 (RPSSQPIMSQSL) and 897–907 (GHGSLNSISRH). Serine 916 carries the phosphoserine modification. Polar residues predominate over residues 919 to 933 (IRKTATAGRSKSFNN). The residue at position 927 (arginine 927) is a Symmetric dimethylarginine; by PRMT5. Serine 930 bears the Phosphoserine mark. The stretch at 940 to 967 (EVIAQDIEATMNSALNELRELERQSSVK) forms a coiled coil. Residues 983–1012 (SPVVAPTSEPSSPLHTQLLKDPEPAFQRSA) are disordered. Phosphoserine occurs at positions 990, 994, 1013, and 1027. The disordered stretch occupies residues 1029–1071 (KMAAPVKPPATRPKPTVFPKTNATSPGVNSSTSPQSTDKSCTV). Positions 1047–1071 (PKTNATSPGVNSSTSPQSTDKSCTV) are enriched in polar residues.

Homodimer. Heterodimer; forms a heterodimer with SRGAP2C, altering SRGAP2 function. Forms a heterooligomer with SRGAP1 and SRGAP3 through its F-BAR domain. Interacts (via SH3 domain) with GPHN. Interacts (via SH3 domain) with FMNL1 (activated by RAC1); regulates the actin filament severing activity of FMNL1 and actin dynamics. Interacts (via SH3 domain) with FMNL3. Interacts with RAC1; specifically stimulates RAC1 GTPase activity. Interacts (via F-BAR domain) with HOMER1. Interacts with ROBO1 and ROBO2. Interacts with FASLG. Interacts with PRMT5. Methylation at Arg-927 is required for the stimulation of cell migration, dimerization and localization at the plasma membrane protrusions.

It is found in the cell membrane. The protein resides in the cell projection. Its subcellular location is the dendritic spine. It localises to the postsynaptic density. The protein localises to the postsynaptic cell membrane. It is found in the lamellipodium. The protein resides in the cytoplasmic vesicle. Its subcellular location is the phagosome. It localises to the nucleus. The protein localises to the cytoplasm. It is found in the cytosol. With respect to regulation, activity is strongly inhibited by SRGAP2C, which heterodimerize with SRGAP2/SRGAP2A, thereby reducing SRGAP2/SRGAP2A levels through proteasome-dependent degradation. Its function is as follows. Postsynaptic RAC1 GTPase activating protein (GAP) that plays a key role in neuronal morphogenesis and migration mainly during development of the cerebral cortex. Regulates excitatory and inhibitory synapse maturation and density in cortical pyramidal neurons. SRGAP2/SRGAP2A limits excitatory and inhibitory synapse density through its RAC1-specific GTPase activating activity, while it promotes maturation of both excitatory and inhibitory synapses through its ability to bind to the postsynaptic scaffolding protein HOMER1 at excitatory synapses, and the postsynaptic protein GPHN at inhibitory synapses. Mechanistically, acts by binding and deforming membranes, thereby regulating actin dynamics to regulate cell migration and differentiation. Promotes cell repulsion and contact inhibition of locomotion: localizes to protrusions with curved edges and controls the duration of RAC1 activity in contact protrusions. In non-neuronal cells, may also play a role in cell migration by regulating the formation of lamellipodia and filopodia. The protein is SLIT-ROBO Rho GTPase-activating protein 2 of Homo sapiens (Human).